The sequence spans 99 residues: DNA-directed RNA polymerase subunit omega (99 aa).

The protein belongs to the RNA polymerase subunit omega family. As to quaternary structure, the RNAP catalytic core consists of 2 alpha, 1 beta, 1 beta' and 1 omega subunit. When a sigma factor is associated with the core the holoenzyme is formed, which can initiate transcription.

The enzyme catalyses RNA(n) + a ribonucleoside 5'-triphosphate = RNA(n+1) + diphosphate. Promotes RNA polymerase assembly. Latches the N- and C-terminal regions of the beta' subunit thereby facilitating its interaction with the beta and alpha subunits. This is DNA-directed RNA polymerase subunit omega from Xanthomonas axonopodis pv. citri (strain 306).